The following is a 994-amino-acid chain: NACHT, LRR and PYD domains-containing protein 4 (994 aa).

Positions 1-94 constitute a Pyrin domain; the sequence is MAASFFSDFG…CMKVMRERTG (94 aa). In terms of domain architecture, NACHT spans 149–472; the sequence is RTVIIQGPQG…FYLLKSHLDH (324 aa). Position 155 to 162 (155 to 162) interacts with ATP; it reads GPQGIGKT. LRR repeat units lie at residues 637–660, 698–721, 722–745, 750–777, 806–833, 863–886, 920–943, and 949–972; these read SGHL…TWCN, YLSF…LNYP, AGNV…VLAG, NKKL…LCSP, NKSV…ALKH, NQNL…LLCR, SKTL…VLCE, and ECAL…LLTA.

It belongs to the NLRP family. Interacts with CHUK/IKKA, inhibiting its kinase activity.

Functionally, may be involved in inflammation and recognition of cytosolic pathogen-associated molecular patterns (PAMPs) not intercepted by membrane-bound receptors. Acts as a negative regulator of the type I interferon signaling pathway by serving as an adapter to promote DTX4-mediated ubiquitination of activated TBK1, and its subsequent degradation. Suppresses NF-kappaB induction by the cytokines TNFA and IL1B, suggesting that it operates at a point of convergence in these two cytokine signaling pathways. This is NACHT, LRR and PYD domains-containing protein 4 from Homo sapiens (Human).